Reading from the N-terminus, the 128-residue chain is MGDYGPFGFDPDEFDRVIREGSEGLRDAFERIGRFLSSSGAGTGWSAIFEDLSRRSRPAPETAGEAGDGVWAIYTVDADGGARVEQVYATELDALRANKDNTDPKRKVRFLPYGIAVSVLDDPVDEAQ.

This is an uncharacterized protein from Mycobacterium tuberculosis (strain CDC 1551 / Oshkosh).